A 485-amino-acid polypeptide reads, in one-letter code: Serine/threonine-protein kinase 4 (485 aa).

One can recognise a Protein kinase domain in the interval 30–281; it reads FDVLEKLGEG…ATELLQHPFI (252 aa). ATP contacts are provided by residues 36–44 and lysine 59; that span reads LGEGSYGSV. The Proton acceptor role is filled by aspartate 149. At threonine 183 the chain carries Phosphothreonine; by autocatalysis. The SARAH domain occupies 431-478; sequence YSFLKDWSVAEVQLKLNSLDPMMEREIEEIHHKYQAKRQPILEAIESK.

The protein belongs to the protein kinase superfamily. STE Ser/Thr protein kinase family. STE20 subfamily. As to quaternary structure, homodimer; mediated via the coiled-coil region. It depends on Mg(2+) as a cofactor. In terms of processing, autophosphorylated on Thr-183. Proteolytically cleaved by caspase-3 during apoptosis at Asp-326 resulting in a 37 kDa form. Proteolytic cleavage results in kinase activation and nuclear translocation of the truncated form (MST1/N).

It is found in the cytoplasm. It localises to the nucleus. It carries out the reaction L-seryl-[protein] + ATP = O-phospho-L-seryl-[protein] + ADP + H(+). The enzyme catalyses L-threonyl-[protein] + ATP = O-phospho-L-threonyl-[protein] + ADP + H(+). With respect to regulation, the C-terminal non-catalytic region inhibits the kinase activity, the enzyme is activated by caspase-cleavage. Homodimerization and autophosphorylation of Thr-183 is also required for full activation. Its function is as follows. Stress-activated, pro-apoptotic kinase which, following caspase-cleavage, enters the nucleus and induces chromatin condensation followed by internucleosomal DNA fragmentation. Key component of the Hippo signaling pathway which plays a pivotal role in organ size control and tumor suppression by restricting proliferation and promoting apoptosis. The core of this pathway is composed of a kinase cascade wherein stk3/mst2 and stk4/mst1, in complex with its regulatory protein sav1, phosphorylates and activates lats1/2 in complex with its regulatory protein mob1, which in turn phosphorylates and inactivates yap1 oncoprotein and wwtr1/taz. Phosphorylation of yap1 by lats2 inhibits its translocation into the nucleus to regulate cellular genes important for cell proliferation, cell death, and cell migration. Phosphorylates 'Ser-14' of histone H2B (H2BS14ph) during apoptosis. This is Serine/threonine-protein kinase 4 (stk4) from Xenopus laevis (African clawed frog).